A 276-amino-acid chain; its full sequence is MTETWNFINTGSKDPYYNMAMDEALLNFVSRGEIDPVIRFYTWNPATLSIGYFQRLQKEIDIDKVKEKGFGLVRRQTGGRGVLHDKELTYSVIVPESHPNMPSTVTEAYRVISQGLLEGFKNLGFDTYFAVPKTPEERQKLKQPRSSVCFDAPSWYELVVEGRKIAGSAQTRQKGVILQHGSILQDIDIDELFDMFIYKNERLKLKMKEAFVEKAVAINDISDEHITISQMEEAFEKGFKKGLNIELKPLELTEAQLAEVEELTEKYRSDEWMFRK.

The BPL/LPL catalytic domain maps to 32 to 247; the sequence is GEIDPVIRFY…GFKKGLNIEL (216 aa). The active-site Acyl-thioester intermediate is Cys149.

Belongs to the octanoyltransferase LipM family. Monomer.

The enzyme catalyses octanoyl-[ACP] + L-lysyl-[protein] = N(6)-octanoyl-L-lysyl-[protein] + holo-[ACP] + H(+). Its pathway is protein modification; protein lipoylation via endogenous pathway; protein N(6)-(lipoyl)lysine from octanoyl-[acyl-carrier-protein]. Catalyzes the transfer of endogenously produced octanoic acid from octanoyl-acyl-carrier-protein onto the lipoyl domain of GcvH, an intermediate carrier during protein lipoylation. This Staphylococcus aureus (strain NCTC 8325 / PS 47) protein is Octanoyltransferase LipM.